Reading from the N-terminus, the 117-residue chain is Large ribosomal subunit protein uL18 (117 aa).

It belongs to the universal ribosomal protein uL18 family. In terms of assembly, part of the 50S ribosomal subunit; part of the 5S rRNA/L5/L18/L25 subcomplex. Contacts the 5S and 23S rRNAs.

Its function is as follows. This is one of the proteins that bind and probably mediate the attachment of the 5S RNA into the large ribosomal subunit, where it forms part of the central protuberance. In Vibrio campbellii (strain ATCC BAA-1116), this protein is Large ribosomal subunit protein uL18.